The primary structure comprises 373 residues: Putative glutamate--cysteine ligase 2-1 (373 aa).

The protein belongs to the glutamate--cysteine ligase type 2 family. YbdK subfamily.

It catalyses the reaction L-cysteine + L-glutamate + ATP = gamma-L-glutamyl-L-cysteine + ADP + phosphate + H(+). In terms of biological role, ATP-dependent carboxylate-amine ligase which exhibits weak glutamate--cysteine ligase activity. The polypeptide is Putative glutamate--cysteine ligase 2-1 (Legionella pneumophila (strain Paris)).